We begin with the raw amino-acid sequence, 95 residues long: Protein TusB (95 aa).

The protein belongs to the DsrH/TusB family. Heterohexamer, formed by a dimer of trimers. The hexameric TusBCD complex contains 2 copies each of TusB, TusC and TusD. The TusBCD complex interacts with TusE.

The protein resides in the cytoplasm. Its function is as follows. Part of a sulfur-relay system required for 2-thiolation of 5-methylaminomethyl-2-thiouridine (mnm(5)s(2)U) at tRNA wobble positions. The chain is Protein TusB from Buchnera aphidicola subsp. Schizaphis graminum (strain Sg).